A 92-amino-acid chain; its full sequence is MGRSLKKGPFCDEHLMKKIEKLNETGQKQVIKTWSRRSTIFPQFVGHTIAVYDGRKHVPVYITEDMVGHKLGEFAPTRTFRGHAGDDKKTKR.

It belongs to the universal ribosomal protein uS19 family.

Its function is as follows. Protein S19 forms a complex with S13 that binds strongly to the 16S ribosomal RNA. The chain is Small ribosomal subunit protein uS19 from Geobacillus sp. (strain WCH70).